The primary structure comprises 232 residues: uncharacterized protein (232 aa).

The interval 1–71 (MSNPTIEGDE…KENERIKNDD (71 aa)) is disordered. Positions 25–38 (DDLDDLDDILDDLD) are enriched in acidic residues. Basic and acidic residues predominate over residues 44–71 (KNEEKKNIDEHKQTGNTSKENERIKNDD).

This is an uncharacterized protein from Schizosaccharomyces pombe (strain 972 / ATCC 24843) (Fission yeast).